The sequence spans 923 residues: Mitochondrial 10-formyltetrahydrofolate dehydrogenase (923 aa).

The N-terminal 19 residues, 1 to 19 (MLWRGSQALRHFSTSRVYF), are a transit peptide targeting the mitochondrion; not cleaved. The hydrolase domain stretch occupies residues 23–331 (LKLALIGQSL…PASQYFSAGE (309 aa)). A Phosphoserine modification is found at serine 31. Lysine 60 carries the post-translational modification N6-succinyllysine. 110-112 (QFI) is a (6R)-10-formyltetrahydrofolate binding site. Histidine 128 acts as the Proton donor in catalysis. Aspartate 164 serves as a coordination point for (6R)-10-formyltetrahydrofolate. The region spanning 339-416 (AEELKVAETI…DFIQKVVRRL (78 aa)) is the Carrier domain. Serine 375 is subject to O-(pantetheine 4'-phosphoryl)serine. Residues 438–923 (TVKIPYQCFI…LKIKTVTLEY (486 aa)) are aldehyde dehydrogenase domain. NADP(+) contacts are provided by residues 592-594 (IPW) and 618-621 (KPAQ). Serine 650 carries the post-translational modification Phosphoserine. NADP(+) is bound by residues 651–656 (GGVAGQ) and 671–672 (GS). Position 681 is an N6-succinyllysine (lysine 681). Glutamate 694 (proton acceptor) is an active-site residue. Residue 694–695 (EL) participates in NADP(+) binding. Catalysis depends on cysteine 728, which acts as the Proton donor. Residues lysine 778 and 825 to 827 (ESF) contribute to the NADP(+) site. Lysine 903 bears the N6-acetyllysine mark.

The protein in the N-terminal section; belongs to the GART family. It in the C-terminal section; belongs to the aldehyde dehydrogenase family. ALDH1L subfamily. Post-translationally, phosphopantetheinylation at Ser-375 by AASDHPPT is required for the formyltetrahydrofolate dehydrogenase activity.

It localises to the mitochondrion. It catalyses the reaction (6R)-10-formyltetrahydrofolate + NADP(+) + H2O = (6S)-5,6,7,8-tetrahydrofolate + CO2 + NADPH + H(+). Functionally, mitochondrial 10-formyltetrahydrofolate dehydrogenase that catalyzes the NADP(+)-dependent conversion of 10-formyltetrahydrofolate to tetrahydrofolate and carbon dioxide. The polypeptide is Mitochondrial 10-formyltetrahydrofolate dehydrogenase (Mus musculus (Mouse)).